The chain runs to 189 residues: uncharacterized protein (189 aa).

It belongs to the isochorismatase family.

This is an uncharacterized protein from Bacillus subtilis (strain 168).